Consider the following 485-residue polypeptide: Probable carboxypeptidase S-like 1 (485 aa).

The first 21 residues, 1–21 (MIFKFFFIFFLIILVIKISES), serve as a signal peptide directing secretion. His111 serves as a coordination point for Zn(2+). Asp113 is a catalytic residue. Asp142 serves as a coordination point for Zn(2+). Glu177 functions as the Proton acceptor in the catalytic mechanism. Residues Glu178, Asp204, and His431 each contribute to the Zn(2+) site.

This sequence belongs to the peptidase M20A family. Requires Zn(2+) as cofactor.

It is found in the secreted. The polypeptide is Probable carboxypeptidase S-like 1 (Dictyostelium discoideum (Social amoeba)).